The sequence spans 198 residues: Probable GTP-binding protein EngB (198 aa).

One can recognise an EngB-type G domain in the interval Ser-36–Glu-198. GTP is bound by residues Gly-44–Ser-51, Gly-70–Leu-74, Asp-88–Gly-91, Asn-155–Asp-158, and Ile-182–Ala-184. Residues Ser-51 and Thr-72 each coordinate Mg(2+).

This sequence belongs to the TRAFAC class TrmE-Era-EngA-EngB-Septin-like GTPase superfamily. EngB GTPase family. The cofactor is Mg(2+).

Its function is as follows. Necessary for normal cell division and for the maintenance of normal septation. This chain is Probable GTP-binding protein EngB, found in Mesomycoplasma hyopneumoniae (strain J / ATCC 25934 / NCTC 10110) (Mycoplasma hyopneumoniae).